Consider the following 624-residue polypeptide: Chaperone protein HtpG (624 aa).

An a; substrate-binding region spans residues M1 to R336. A b region spans residues E337–K552. Positions L553–S624 are c.

Belongs to the heat shock protein 90 family. In terms of assembly, homodimer.

Its subcellular location is the cytoplasm. Molecular chaperone. Has ATPase activity. The chain is Chaperone protein HtpG from Escherichia coli O139:H28 (strain E24377A / ETEC).